Consider the following 212-residue polypeptide: Molybdenum cofactor guanylyltransferase (212 aa).

GTP-binding positions include 14-16 (LAG), K27, N55, D73, and D108. Residue D108 coordinates Mg(2+).

Belongs to the MobA family. Monomer. The cofactor is Mg(2+).

It localises to the cytoplasm. The catalysed reaction is Mo-molybdopterin + GTP + H(+) = Mo-molybdopterin guanine dinucleotide + diphosphate. Functionally, transfers a GMP moiety from GTP to Mo-molybdopterin (Mo-MPT) cofactor (Moco or molybdenum cofactor) to form Mo-molybdopterin guanine dinucleotide (Mo-MGD) cofactor. In Bradyrhizobium sp. (strain ORS 278), this protein is Molybdenum cofactor guanylyltransferase.